Reading from the N-terminus, the 282-residue chain is Protoheme IX farnesyltransferase (282 aa).

Transmembrane regions (helical) follow at residues leucine 40–valine 60, alanine 87–proline 107, tyrosine 108–leucine 128, serine 135–glycine 157, glycine 162–tyrosine 184, alanine 204–phenylalanine 224, leucine 228–leucine 248, and alanine 261–leucine 281.

This sequence belongs to the UbiA prenyltransferase family. Protoheme IX farnesyltransferase subfamily.

It localises to the cell membrane. The catalysed reaction is heme b + (2E,6E)-farnesyl diphosphate + H2O = Fe(II)-heme o + diphosphate. It participates in porphyrin-containing compound metabolism; heme O biosynthesis; heme O from protoheme: step 1/1. Converts heme B (protoheme IX) to heme O by substitution of the vinyl group on carbon 2 of heme B porphyrin ring with a hydroxyethyl farnesyl side group. In Thermofilum pendens (strain DSM 2475 / Hrk 5), this protein is Protoheme IX farnesyltransferase.